The chain runs to 366 residues: Reticulon-4-interacting protein 1, mitochondrial (366 aa).

The transit peptide at 1-20 directs the protein to the mitochondrion; it reads MIEKMILRRFFSTKSSTMRA.

Belongs to the zinc-containing alcohol dehydrogenase family. Quinone oxidoreductase subfamily. In terms of tissue distribution, expressed in pharynx, muscles and intestine.

Its subcellular location is the mitochondrion. In terms of biological role, plays a role in oxygen metabolism in the mitochondria by regulating the levels of reactive oxygen species (ROS) thereby conferring resistance to oxidative stress. Involved in resistance to P.aeruginosa PA14 infection. Regulates lifespan. The sequence is that of Reticulon-4-interacting protein 1, mitochondrial from Caenorhabditis elegans.